The following is an 811-amino-acid chain: Hypoxia-inducible factor 1-alpha (811 aa).

The tract at residues 1–27 (MDSPGGVTDKKRISSERRKEKSRDAAR) is disordered. Over residues 8 to 27 (TDKKRISSERRKEKSRDAAR) the composition is skewed to basic and acidic residues. The region spanning 17–70 (RRKEKSRDAARCRRSKESEVFYELAHQLPLPHTVSAHLDKASIMRLTISYLRMR) is the bHLH domain. PAS domains are found at residues 80–157 (TEAN…PVKK) and 228–298 (PHPS…FTKG). One can recognise a PAC domain in the interval 302 to 345 (TGQYRMLAKQGGYVWVETQATVIYNTKNSQPQCIVCVNYVLSGI). Residues 401–587 (APAAGDTIIS…LSPLESSSSG (187 aa)) are ODD. Residue proline 402 is modified to 4-hydroxyproline. The segment at 490–518 (PQVQEQPTSPSDASTSQSSPEPSSPNDYC) is disordered. Residues 496–514 (PTSPSDASTSQSSPEPSSP) show a composition bias toward low complexity. Positions 529–573 (FKLELVEKLFAIDTEAKNPFSTQETDLDLEMLAPYIPMDDDFQLR) are NTAD. Proline 562 is subject to 4-hydroxyproline. Positions 576–785 (DQLSPLESSS…GLPQLTSYDC (210 aa)) are ID. Residues 634–652 (NDTSSAPASPYSGNRSRTA) show a composition bias toward polar residues. The interval 634–655 (NDTSSAPASPYSGNRSRTASPI) is disordered. Short sequence motifs (nuclear localization signal) lie at residues 703–706 (RKRK) and 718–721 (GIGS). The CTAD stretch occupies residues 771–811 (SMDESGLPQLTSYDCEVNAPIQGNRNLLQGEELLRALDQVN). Residue asparagine 788 is modified to (3S)-3-hydroxyasparagine.

Efficient DNA binding requires heterodimerization of an alpha and a beta/ARNT subunit. In normoxia, is hydroxylated on Pro-402 and Pro-562. The hydroxylated prolines promote interaction with VHL, initiating rapid ubiquitination and subsequent proteasomal degradation. Under hypoxia, proline hydroxylation is impaired and ubiquitination is attenuated, resulting in stabilization. Post-translationally, in normoxia, is hydroxylated on Asn-788, thus abrogating interaction with CREBBP and EP300 and preventing transcriptional activation. In terms of processing, the iron and 2-oxoglutarate dependent 3-hydroxylation of asparagine is (S) stereospecific within HIF CTAD domains.

The protein localises to the cytoplasm. The protein resides in the nucleus. It localises to the nucleus speckle. Induced by reactive oxygen species (ROS). Functions as a master transcriptional regulator of the adaptive response to hypoxia. Under hypoxic conditions, activates the transcription of over 40 genes, including erythropoietin, glucose transporters, glycolytic enzymes, vascular endothelial growth factor, HILPDA, and other genes whose protein products increase oxygen delivery or facilitate metabolic adaptation to hypoxia. Plays an essential role in embryonic vascularization, tumor angiogenesis and pathophysiology of ischemic disease. The protein is Hypoxia-inducible factor 1-alpha (HIF1A) of Gallus gallus (Chicken).